We begin with the raw amino-acid sequence, 325 residues long: Heme A synthase (325 aa).

A run of 5 helical transmembrane segments spans residues 6 to 26, 88 to 108, 116 to 136, 155 to 175, and 184 to 204; these read WLAVCILLILSMVSIGGFTRL, LVGRILGLVFFIGLVYFFVVG, LRLCFALVLGVIQGFVGWYMV, LFCASLLFMVLVYEFLSPTVI, and LVGCSLMFLLSMQIILGGLVA. A heme-binding site is contributed by His246. The next 3 membrane-spanning stretches (helical) occupy residues 248 to 268, 275 to 295, and 297 to 317; these read MSAFLLTFICLVCLVISFFYD, VFLVASMMLLQMFFGVLTLLF, and IPIDIALLHQIMAFILLGICV. His305 is a binding site for heme.

This sequence belongs to the COX15/CtaA family. Type 2 subfamily. In terms of assembly, interacts with CtaB. It depends on heme b as a cofactor.

It is found in the cell membrane. It carries out the reaction Fe(II)-heme o + 2 A + H2O = Fe(II)-heme a + 2 AH2. The protein operates within porphyrin-containing compound metabolism; heme A biosynthesis; heme A from heme O: step 1/1. In terms of biological role, catalyzes the conversion of heme O to heme A by two successive hydroxylations of the methyl group at C8. The first hydroxylation forms heme I, the second hydroxylation results in an unstable dihydroxymethyl group, which spontaneously dehydrates, resulting in the formyl group of heme A. In Neorickettsia sennetsu (strain ATCC VR-367 / Miyayama) (Ehrlichia sennetsu), this protein is Heme A synthase.